The sequence spans 563 residues: Arginine--tRNA ligase (563 aa).

A 'HIGH' region motif is present at residues 120-130 (PNIAKPFHIGH).

The protein belongs to the class-I aminoacyl-tRNA synthetase family. In terms of assembly, monomer.

The protein localises to the cytoplasm. It catalyses the reaction tRNA(Arg) + L-arginine + ATP = L-arginyl-tRNA(Arg) + AMP + diphosphate. The sequence is that of Arginine--tRNA ligase from Clostridium botulinum (strain Loch Maree / Type A3).